The sequence spans 332 residues: D-alanine--D-alanine ligase (332 aa).

Residues 112–312 (KRIWRADGLP…YPDLCLRILA (201 aa)) enclose the ATP-grasp domain. 138-193 (FQELGAPMIVKPSREGSTIGLTKVTSLGQCEQAYRLAAQHDPEVLCEQFIDGDETT) is an ATP binding site. Positions 265, 279, and 281 each coordinate Mg(2+).

It belongs to the D-alanine--D-alanine ligase family. Requires Mg(2+) as cofactor. The cofactor is Mn(2+).

It localises to the cytoplasm. The enzyme catalyses 2 D-alanine + ATP = D-alanyl-D-alanine + ADP + phosphate + H(+). The protein operates within cell wall biogenesis; peptidoglycan biosynthesis. Its function is as follows. Cell wall formation. The protein is D-alanine--D-alanine ligase of Acidovorax ebreus (strain TPSY) (Diaphorobacter sp. (strain TPSY)).